Consider the following 351-residue polypeptide: Soluble TNF receptor II (351 aa).

A signal peptide spans 1 to 19; that stretch reads MKSVLYSYILFLSCIIING. TNFR-Cys repeat units follow at residues 31–67 and 69–110; these read KCKD…NTQC and PCGS…NRIC. 6 disulfides stabilise this stretch: C32-C43, C44-C57, C47-C67, C70-C85, C88-C102, and C92-C110. N-linked (GlcNAc...) asparagine; by host glycosylation is found at N103, N191, and N250.

It belongs to the orthopoxvirus OPG002 family.

The protein resides in the secreted. In terms of biological role, inhibits host immune defense by binding to host TNF and various chemokines in the extracellular space. Binds host CC chemokines (beta chemokines) and CXC chemokines (alpha chemokines). This is Soluble TNF receptor II (OPG002) from Bos taurus (Bovine).